A 149-amino-acid chain; its full sequence is Large ribosomal subunit protein bL9 (149 aa).

Belongs to the bacterial ribosomal protein bL9 family.

Functionally, binds to the 23S rRNA. This is Large ribosomal subunit protein bL9 from Salmonella dublin (strain CT_02021853).